Consider the following 81-residue polypeptide: Photosystem I iron-sulfur center (81 aa).

2 consecutive 4Fe-4S ferredoxin-type domains span residues 2 to 31 and 39 to 68; these read VHVV…MVPW and IASS…IRVY. Cys-11, Cys-14, Cys-17, Cys-21, Cys-48, Cys-51, Cys-54, and Cys-58 together coordinate [4Fe-4S] cluster.

As to quaternary structure, the eukaryotic PSI reaction center is composed of at least 11 subunits. The cofactor is [4Fe-4S] cluster.

The protein localises to the plastid. Its subcellular location is the chloroplast thylakoid membrane. It carries out the reaction reduced [plastocyanin] + hnu + oxidized [2Fe-2S]-[ferredoxin] = oxidized [plastocyanin] + reduced [2Fe-2S]-[ferredoxin]. Apoprotein for the two 4Fe-4S centers FA and FB of photosystem I (PSI); essential for photochemical activity. FB is the terminal electron acceptor of PSI, donating electrons to ferredoxin. The C-terminus interacts with PsaA/B/D and helps assemble the protein into the PSI complex. Required for binding of PsaD and PsaE to PSI. PSI is a plastocyanin/cytochrome c6-ferredoxin oxidoreductase, converting photonic excitation into a charge separation, which transfers an electron from the donor P700 chlorophyll pair to the spectroscopically characterized acceptors A0, A1, FX, FA and FB in turn. The chain is Photosystem I iron-sulfur center from Cyanidium caldarium (Red alga).